The following is a 194-amino-acid chain: MRLCDTDIERYLDDGIIALTPRPSNDKINGATIDVRLGNSFRVFREHSAPYIDLSGPKEQVSAQLESVMSEEILIGENDAFFLHPGELALATTLESVKLPANIIGWLDGRSSLARLGLMVHVTAHRIDPGWEGRIVLEFFNSGKLPLALRPNMVIGALSFEILSGYAARPYSSRKNAKYKNQQSAVASRIDEDK.

Residues 110-115 (RSSLAR), Asp-128, 136-138 (VLE), Tyr-171, Lys-178, and Gln-182 contribute to the dCTP site. The active-site Proton donor/acceptor is Glu-138.

This sequence belongs to the dCTP deaminase family. Homotrimer.

The enzyme catalyses dCTP + H2O + H(+) = dUTP + NH4(+). Its pathway is pyrimidine metabolism; dUMP biosynthesis; dUMP from dCTP (dUTP route): step 1/2. Its function is as follows. Catalyzes the deamination of dCTP to dUTP. The protein is dCTP deaminase of Pasteurella multocida (strain Pm70).